A 375-amino-acid chain; its full sequence is Protein SSUH2 homolog (375 aa).

Expressed in enterocytes of small and large intestinal mucosa (at protein level). Expressed in chromaffine and interstitial cells. Expressed in peripheral blood and gingival cells.

It is found in the cytoplasm. Its subcellular location is the nucleus. Functionally, plays a role in odontogenesis. This Homo sapiens (Human) protein is Protein SSUH2 homolog.